The chain runs to 379 residues: L-lactate dehydrogenase (379 aa).

The FMN hydroxy acid dehydrogenase domain occupies 1 to 379 (MIISSSTDYR…ISPDSLVRGL (379 aa)). Position 24 (tyrosine 24) interacts with substrate. Positions 106 and 127 each coordinate FMN. Tyrosine 129 is a binding site for substrate. An FMN-binding site is contributed by threonine 155. Residue arginine 164 coordinates substrate. Lysine 251 serves as a coordination point for FMN. Residue histidine 275 is the Proton acceptor of the active site. Arginine 278 lines the substrate pocket. 306-330 (DSGIRSGLDVVRMIAQGADGVLIGR) lines the FMN pocket.

This sequence belongs to the FMN-dependent alpha-hydroxy acid dehydrogenase family. The cofactor is FMN.

The protein localises to the cell inner membrane. It catalyses the reaction (S)-lactate + A = pyruvate + AH2. Functionally, catalyzes the conversion of L-lactate to pyruvate. Is coupled to the respiratory chain. The chain is L-lactate dehydrogenase from Allorhizobium ampelinum (strain ATCC BAA-846 / DSM 112012 / S4) (Agrobacterium vitis (strain S4)).